Here is a 147-residue protein sequence, read N- to C-terminus: Ubiquitin-conjugating enzyme E2-16 kDa (147 aa).

Residues 1-147 form the UBC core domain; sequence MALKRINKEL…AREWTRKYAI (147 aa). Cysteine 107 serves as the catalytic Glycyl thioester intermediate.

The protein belongs to the ubiquitin-conjugating enzyme family.

It carries out the reaction S-ubiquitinyl-[E1 ubiquitin-activating enzyme]-L-cysteine + [E2 ubiquitin-conjugating enzyme]-L-cysteine = [E1 ubiquitin-activating enzyme]-L-cysteine + S-ubiquitinyl-[E2 ubiquitin-conjugating enzyme]-L-cysteine.. It participates in protein modification; protein ubiquitination. In terms of biological role, catalyzes the covalent attachment of ubiquitin to other proteins. The chain is Ubiquitin-conjugating enzyme E2-16 kDa (UBC1) from Pyricularia oryzae (strain 70-15 / ATCC MYA-4617 / FGSC 8958) (Rice blast fungus).